The primary structure comprises 314 residues: Probable tRNA pseudouridine synthase B (314 aa).

The span at 1–10 (MATRGRHRSR) shows a compositional bias: basic residues. The interval 1-30 (MATRGRHRSRTSGTSSEPMTLRAPPDERDL) is disordered. Catalysis depends on Asp72, which acts as the Nucleophile. The PUA domain occupies 237 to 314 (LPRVTIAPSA…LVVELDRMLV (78 aa)).

This sequence belongs to the pseudouridine synthase TruB family. Type 2 subfamily.

It catalyses the reaction uridine(55) in tRNA = pseudouridine(55) in tRNA. In terms of biological role, could be responsible for synthesis of pseudouridine from uracil-55 in the psi GC loop of transfer RNAs. This chain is Probable tRNA pseudouridine synthase B, found in Haloarcula marismortui (strain ATCC 43049 / DSM 3752 / JCM 8966 / VKM B-1809) (Halobacterium marismortui).